A 310-amino-acid polypeptide reads, in one-letter code: Coproporphyrin III ferrochelatase (310 aa).

Y13 provides a ligand contact to Fe-coproporphyrin III. Y13 is an N-methylmesoporphyrin binding site. E20 provides a ligand contact to Mg(2+). R30 serves as a coordination point for Fe-coproporphyrin III. 31-33 (RGR) lines the N-methylmesoporphyrin pocket. R46 serves as a coordination point for Mg(2+). Residues 46-47 (RY), S54, and Y125 contribute to the Fe-coproporphyrin III site. Positions 183 and 188 each coordinate N-methylmesoporphyrin. H183 contacts Fe(2+). E264 lines the Fe(2+) pocket. Residues D268 and E272 each contribute to the Mg(2+) site.

The protein belongs to the ferrochelatase family. Monomer. Interacts with frataxin/Fra.

It is found in the cytoplasm. It catalyses the reaction Fe-coproporphyrin III + 2 H(+) = coproporphyrin III + Fe(2+). It participates in porphyrin-containing compound metabolism; protoheme biosynthesis. Its activity is regulated as follows. Stimulated by Mg(2+). Inhibited by Cd(2+). Inhibited by N-methylmesoporphyrin (N-MeMP) and 2,4-disulfonic acid deuteroporphyrin IX (dSDP). Its function is as follows. Involved in coproporphyrin-dependent heme b biosynthesis. Catalyzes the insertion of ferrous iron into coproporphyrin III to form Fe-coproporphyrin III. It can also insert iron into protoporphyrin IX. Has weaker activity with 2,4 disulfonate, deuteroporphyrin and 2,4 hydroxyethyl. In vitro, can also use Zn(2+) or Cu(2+). This is Coproporphyrin III ferrochelatase from Bacillus subtilis (strain 168).